The chain runs to 74 residues: Sec-independent protein translocase protein TatA (74 aa).

A helical transmembrane segment spans residues 1–21 (MGSFSIWHWLIVLLIVVLVFG).

This sequence belongs to the TatA/E family. In terms of assembly, the Tat system comprises two distinct complexes: a TatABC complex, containing multiple copies of TatA, TatB and TatC subunits, and a separate TatA complex, containing only TatA subunits. Substrates initially bind to the TatABC complex, which probably triggers association of the separate TatA complex to form the active translocon.

The protein resides in the cell inner membrane. Part of the twin-arginine translocation (Tat) system that transports large folded proteins containing a characteristic twin-arginine motif in their signal peptide across membranes. TatA could form the protein-conducting channel of the Tat system. The protein is Sec-independent protein translocase protein TatA of Nitrosospira multiformis (strain ATCC 25196 / NCIMB 11849 / C 71).